We begin with the raw amino-acid sequence, 162 residues long: Protein snakeskin (162 aa).

The Cytoplasmic segment spans residues 2–6; sequence VSVET. A helical transmembrane segment spans residues 7–27; it reads VGSIFIKALKLIINLVIIFLY. At 28–53 the chain is on the extracellular side; it reads RWGDGGEFLGIGGTWNLNEEKSADAE. Residues 54-74 traverse the membrane as a helical segment; that stretch reads IVASGVMVGFLIYTGCHTIAF. At 75 to 88 the chain is on the cytoplasmic side; the sequence is AFGTTKHKGELCDT. The helical transmembrane segment at 89 to 109 threads the bilayer; sequence IMNVVGCIMWIAVGGVALHYW. At 110–128 the chain is on the extracellular side; that stretch reads KGYMSDEGFLYVNSERQVG. A helical membrane pass occupies residues 129 to 149; that stretch reads IAMGSLCVIEGALYLLDTVLA. Over 150–162 the chain is Cytoplasmic; that stretch reads CIHYSKGDTDYTQ.

In terms of assembly, forms a complex with Tsp2A and mesh. Interacts with mesh; the interaction may be necessary for the localization of both proteins to the cell apicolateral region.

The protein localises to the apicolateral cell membrane. The protein resides in the cell junction. Its subcellular location is the septate junction. Required for assembly of smooth septate junctions (sSJs), together with mesh and Tsp2A. May be important for barrier function of the midgut epithelium. The polypeptide is Protein snakeskin (Drosophila melanogaster (Fruit fly)).